Here is a 130-residue protein sequence, read N- to C-terminus: Early 3 receptor internalization and degradation beta protein (130 aa).

A signal peptide spans 1–19 (MKRSVIFVLLIFCALPVLC). The helical transmembrane segment at 53–77 (AWLYAIISVMVFCSTIFALAIYPYL) threads the bilayer. Residues 122–125 (YFNL) form a tyrosine-based sorting motif region.

The protein belongs to the adenoviridae E3_RID-beta family. Interacts with E3 RID-alpha and E3 CR1-alpha. Phosphorylated on serine. In terms of processing, O-glycosylated, but not N-glycosylated.

It is found in the host membrane. Functionally, prevents infected cell apoptosis induced by the host immune system. Acts by down-regulating a number of cell surface receptors in the tumor necrosis factor (TNF) receptor superfamily, namely FAS, TNFRSF10A/TRAIL receptor 1, and TNFRSF10B/TRAIL receptor 2. Down-regulation of these death receptors protects adenovirus-infected cells from apoptosis induced by the death receptor ligands Fas ligand and TRAIL. RID complex also down-regulates certain tyrosine kinase cell surface receptors, especially the epidermal growth factor receptor (EGFR). RID-mediated Fas and EGFR down-regulation occurs via endocytosis of the receptors into endosomes followed by transport to and degradation within lysosomes. In Human adenovirus C serotype 2 (HAdV-2), this protein is Early 3 receptor internalization and degradation beta protein.